We begin with the raw amino-acid sequence, 420 residues long: Carboxypeptidase A4 (420 aa).

The first 16 residues, 1-16, serve as a signal peptide directing secretion; it reads MKWLLFFGALIGAGIC. The propeptide at 17 to 113 is activation peptide; sequence GRDKFFGDQV…EMQHNEGIER (97 aa). Residues Pro69, Val71, Asn118, Tyr122, His123, Glu126, and Phe162 each coordinate a protein. Residues 121-415 form the Peptidase M14 domain; it reads AYHPLEAIYH…LGLKTIMEHV (295 aa). His180 and Glu183 together coordinate Zn(2+). The cysteines at positions 249 and 272 are disulfide-linked. Asn259 carries N-linked (GlcNAc...) asparagine glycosylation. His307 provides a ligand contact to Zn(2+). Glu381 serves as the catalytic Proton donor/acceptor.

It belongs to the peptidase M14 family. As to quaternary structure, interacts with LXN. Zn(2+) serves as cofactor.

The protein localises to the secreted. Functionally, metalloprotease that cleaves hydrophobic C-terminal residues with a preference for -Phe, -Leu, -Ile, -Met, -Tyr and -Val. May function in peptide hormone and/or neuropeptide catabolism. The protein is Carboxypeptidase A4 (Cpa4) of Mus musculus (Mouse).